A 578-amino-acid polypeptide reads, in one-letter code: Keratin, type II cytoskeletal 1b (578 aa).

Residues 1–163 form a head region; sequence MSHQFSSQSA…DPEIQRIKTQ (163 aa). An Omega-N-methylarginine modification is found at R95. A coil 1A region spans residues 164-200; the sequence is EREQIMVLNNKFASFIDKVRFLEQQNQVLQTKWELLQ. In terms of domain architecture, IF rod spans 164 to 477; it reads EREQIMVLNN…QLLEGEESRM (314 aa). Positions 201–219 are linker 1; that stretch reads QVNTSTGTNNLEPLLENYI. Positions 220–311 are coil 1B; it reads GDLRRQVDLL…LFLTELSQVQ (92 aa). The segment at 312 to 335 is linker 12; that stretch reads THISDTNVILSMDNNRSLDLDSII. The interval 336-474 is coil 2; it reads DAVRTQYELI…TYRQLLEGEE (139 aa). The interval 475–578 is tail; that stretch reads SRMSGELQSH…TNTSHRRILE (104 aa). Position 523 is an omega-N-methylarginine (R523). Positions 547 to 556 are enriched in gly residues; it reads GSYGGSGRSG. The interval 547–578 is disordered; that stretch reads GSYGGSGRSGRGSSRVQIIQTSTNTSHRRILE. Polar residues predominate over residues 562–571; it reads VQIIQTSTNT.

Belongs to the intermediate filament family. In terms of processing, undergoes deimination of some arginine residues (citrullination). Expressed exclusively in skin.

The protein is Keratin, type II cytoskeletal 1b (KRT77) of Homo sapiens (Human).